Consider the following 110-residue polypeptide: Insulin (110 aa).

An N-terminal signal peptide occupies residues 1–24; sequence MALWMRLLPLLALLALWGPDPAQA. 3 cysteine pairs are disulfide-bonded: Cys-31/Cys-96, Cys-43/Cys-109, and Cys-95/Cys-100. Positions 57 to 87 are cleaved as a propeptide — c peptide; the sequence is EAEDLQVGQVELGGGPGAGSLQPLALEGSLQ.

Belongs to the insulin family. Heterodimer of a B chain and an A chain linked by two disulfide bonds.

Its subcellular location is the secreted. Insulin decreases blood glucose concentration. It increases cell permeability to monosaccharides, amino acids and fatty acids. It accelerates glycolysis, the pentose phosphate cycle, and glycogen synthesis in liver. In Pongo pygmaeus (Bornean orangutan), this protein is Insulin (INS).